The sequence spans 103 residues: Small ribosomal subunit protein uS10 (103 aa).

It belongs to the universal ribosomal protein uS10 family. As to quaternary structure, part of the 30S ribosomal subunit.

Its function is as follows. Involved in the binding of tRNA to the ribosomes. The sequence is that of Small ribosomal subunit protein uS10 from Chlorobium phaeobacteroides (strain DSM 266 / SMG 266 / 2430).